The primary structure comprises 85 residues: Turripeptide PaIAa (85 aa).

The protein belongs to the turripeptide family. In terms of tissue distribution, expressed by the venom duct.

Its subcellular location is the secreted. Functionally, is lethal to drosophila larvae. This is Turripeptide PaIAa from Polystira albida (White giant-turris).